Here is a 288-residue protein sequence, read N- to C-terminus: Bifunctional protein MdtA (288 aa).

Residues 129–132 (TGPV), 152–156 (RKLDK), 195–198 (TAGA), and K256 each bind NADP(+).

In terms of assembly, homotrimer.

It localises to the cytoplasm. The catalysed reaction is 5,10-methylenetetrahydromethanopterin + NADP(+) = 5,10-methenyl-5,6,7,8-tetrahydromethanopterin + NADPH. It catalyses the reaction (6R)-5,10-methylene-5,6,7,8-tetrahydrofolate + NADP(+) = (6R)-5,10-methenyltetrahydrofolate + NADPH. The protein operates within one-carbon metabolism; formaldehyde degradation; formate from formaldehyde (H(4)MPT route): step 2/5. Functionally, catalyzes the dehydrogenation of methylene-H(4)MPT. Can also catalyze the reversible dehydrogenation of methylene-H(4)F with 20-fold lower catalytic efficiency. The protein is Bifunctional protein MdtA of Methylorubrum extorquens (strain ATCC 14718 / DSM 1338 / JCM 2805 / NCIMB 9133 / AM1) (Methylobacterium extorquens).